The chain runs to 506 residues: MECATTATTPWERVRQRLREEIGEEKFTSWFARMDLDKLTADAVQLSVPTRFLKSWIQENYLPRIADIWAEESGAKRRVDLAVRNAFARPVALKANTVREVVTERTDMHSGDTRQQSARISDGRSTDARGADGRGSDARAVEPRAAAAALSDAVAGDVASGSPLDARLTFETFVVGKSNSLAFAAAKQVAESAPGSAPVFNPLYLHAAVGLGKTHLLQAIARAGAVGGRRTTYLTAERFMYGFVAALKTHSAIAFKDALRTIDTLVIDDLQFLKGNNLQQEFCHTLNALLDGGRQVVVAADCLPGELEHLDERVRSRLAGGLVVELAALEEDLRLEILKARYQTLTEQHPGFAVPAPVLEFLARSVGQSGRDLDGALNKLLAFNQLTGEPVTLEMAENAVKDLIRPTDPKRVRVDDILRVVAKHYNVSRADLLSQRRTATVVKPRQIAMYLAKTLTLRSLPEIGRRFGGRDHTTVLHAVRKIDGLVNADRALAEEIEVLKRLALEA.

The segment at 1–77 (MECATTATTP…IWAEESGAKR (77 aa)) is domain I, interacts with DnaA modulators. A domain II region spans residues 77-162 (RRVDLAVRNA…AVAGDVASGS (86 aa)). 2 stretches are compositionally biased toward basic and acidic residues: residues 103-112 (TERTDMHSGD) and 121-142 (SDGRSTDARGADGRGSDARAVE). The segment at 103–142 (TERTDMHSGDTRQQSARISDGRSTDARGADGRGSDARAVE) is disordered. A domain III, AAA+ region region spans residues 163 to 384 (PLDARLTFET…GALNKLLAFN (222 aa)). Positions 210, 212, 213, and 214 each coordinate ATP. Positions 385 to 506 (QLTGEPVTLE…EVLKRLALEA (122 aa)) are domain IV, binds dsDNA.

The protein belongs to the DnaA family. Oligomerizes as a right-handed, spiral filament on DNA at oriC.

The protein localises to the cytoplasm. In terms of biological role, plays an essential role in the initiation and regulation of chromosomal replication. ATP-DnaA binds to the origin of replication (oriC) to initiate formation of the DNA replication initiation complex once per cell cycle. Binds the DnaA box (a 9 base pair repeat at the origin) and separates the double-stranded (ds)DNA. Forms a right-handed helical filament on oriC DNA; dsDNA binds to the exterior of the filament while single-stranded (ss)DNA is stabiized in the filament's interior. The ATP-DnaA-oriC complex binds and stabilizes one strand of the AT-rich DNA unwinding element (DUE), permitting loading of DNA polymerase. After initiation quickly degrades to an ADP-DnaA complex that is not apt for DNA replication. Binds acidic phospholipids. The chain is Chromosomal replication initiator protein DnaA from Xanthobacter autotrophicus (strain ATCC BAA-1158 / Py2).